The chain runs to 997 residues: Malignant fibrous histiocytoma-amplified sequence 1 homolog (997 aa).

LRR repeat units follow at residues 32 to 53 (SLRQ…ADLG), 54 to 76 (DVEV…QSLS), 79 to 100 (NLHV…VYHL), 102 to 123 (RLTE…VGLL), 125 to 146 (KLKK…LGML), 148 to 170 (DLEE…QGLP), 171 to 192 (SLRT…LFHV), 194 to 216 (ALEE…IRSM), 218 to 239 (SLKI…ICEL), 241 to 262 (NLES…FGAL), 264 to 286 (KLKM…LQLV), 287 to 308 (DLEE…ISCM), 310 to 331 (KLVT…IVEL), and 333 to 354 (FLEE…FGKL). The 234-residue stretch at 393 to 626 (QPAVKPRLKL…EKLLSVAEHR (234 aa)) folds into the Roc domain. One can recognise a COR domain in the interval 637–861 (PKSWQMLEEL…RFSVQINSHI (225 aa)).

It localises to the cytoplasm. Functionally, probable GTP-binding protein. Functions in innate immunity and more specifically the inflammatory response as a regulator of the Toll-like receptor TLR2 and TLR4 signaling pathways. The sequence is that of Malignant fibrous histiocytoma-amplified sequence 1 homolog (mfhas1) from Xenopus tropicalis (Western clawed frog).